A 315-amino-acid polypeptide reads, in one-letter code: PDZ domain-containing protein GIPC2 (315 aa).

The span at 1–12 (MPLKLRGKKKAK) shows a compositional bias: basic residues. Positions 1-34 (MPLKLRGKKKAKSKETAGLVEGEPTGAGGGSLSA) are disordered. The region spanning 117-197 (EVNVYKSEDS…EELFTMKLIE (81 aa)) is the PDZ domain.

Belongs to the GIPC family. In terms of assembly, probably interacts with SEMA5A. In terms of tissue distribution, expressed at highest levels in ascending colon and at moderate levels in adult kidney. Expressed at low levels in adult pancreas and at very low levels in adult liver. Expression is down-regulated in several primary tumors, such as kidney, colon and rectal tumors.

It is found in the cytoplasm. This is PDZ domain-containing protein GIPC2 (GIPC2) from Homo sapiens (Human).